A 476-amino-acid chain; its full sequence is Elongation factor Tu, chloroplastic (476 aa).

The N-terminal 67 residues, 1-67, are a transit peptide targeting the chloroplast; it reads MAISAPAACS…QSTRRSFTVR (67 aa). The tr-type G domain maps to 77–281; that stretch reads KPHVNIGTIG…AVDDYIPIPQ (205 aa). The G1 stretch occupies residues 86 to 93; that stretch reads GHVDHGKT. 86–93 provides a ligand contact to GTP; the sequence is GHVDHGKT. A Phosphothreonine modification is found at Thr94. Residues 127–131 are G2; the sequence is GITIN. Residues 148–151 form a G3 region; the sequence is DCPG. Residues 148–152 and 203–206 each bind GTP; these read DCPGH and NKED. The G4 stretch occupies residues 203 to 206; it reads NKED. The tract at residues 241-243 is G5; the sequence is SAL.

Belongs to the TRAFAC class translation factor GTPase superfamily. Classic translation factor GTPase family. EF-Tu/EF-1A subfamily. Interacts with PI5K2. Interacts with APD2.

The protein localises to the plastid. Its subcellular location is the chloroplast. Functionally, this protein promotes the GTP-dependent binding of aminoacyl-tRNA to the A-site of ribosomes during protein biosynthesis. This chain is Elongation factor Tu, chloroplastic (TUFA), found in Arabidopsis thaliana (Mouse-ear cress).